The chain runs to 342 residues: UDP-N-acetylenolpyruvoylglucosamine reductase (342 aa).

The 171-residue stretch at 13–183 folds into the FAD-binding PCMH-type domain; the sequence is IDHNAQHIVC…VAVGLRLPKE (171 aa). Arg159 is a catalytic residue. Tyr190 serves as a coordination point for substrate. The active-site Proton donor is the Ser229. Glu325 is a catalytic residue.

The protein belongs to the MurB family. As to quaternary structure, monomer. Requires FAD as cofactor.

The protein localises to the cytoplasm. It carries out the reaction UDP-N-acetyl-alpha-D-muramate + NADP(+) = UDP-N-acetyl-3-O-(1-carboxyvinyl)-alpha-D-glucosamine + NADPH + H(+). Its pathway is cell wall biogenesis; peptidoglycan biosynthesis. Cell wall formation. The chain is UDP-N-acetylenolpyruvoylglucosamine reductase (murB) from Escherichia coli (strain K12).